The following is a 312-amino-acid chain: Chitin deacetylase 2 (312 aa).

The first 44 residues, 1-44, serve as a signal peptide directing secretion; the sequence is MRIQLNTIDLQCIIALSCLGQFVHAEANREDLKQIDFQFPVLER. An intrachain disulfide couples C117 to C300. The 190-residue stretch at 118 to 307 folds into the NodB homology domain; the sequence is SKLSQTFDDG…SHCVGGIDYI (190 aa). The Proton acceptor role is filled by D125. Residue D125 coordinates acetate. D126 contributes to the Co(2+) binding site. N142 is a glycosylation site (N-linked (GlcNAc...) asparagine). The Co(2+) site is built by H172 and H176. 2 N-linked (GlcNAc...) asparagine glycosylation sites follow: N181 and N199. Y213 contributes to the acetate binding site. 2 N-linked (GlcNAc...) asparagine glycosylation sites follow: N246 and N263. The Proton donor role is filled by H273.

Belongs to the polysaccharide deacetylase family. In terms of assembly, monomer. Co(2+) is required as a cofactor. In terms of processing, N-glycosylated.

Its subcellular location is the prospore. The catalysed reaction is [(1-&gt;4)-N-acetyl-beta-D-glucosaminyl](n) + n H2O = chitosan + n acetate. Its function is as follows. Hydrolyzes the N-acetamido groups of N-acetyl-D-glucosamine residues in chitin to form chitosan and acetate. Chitosan is a component of the spore wall. This chain is Chitin deacetylase 2, found in Saccharomyces cerevisiae (strain ATCC 204508 / S288c) (Baker's yeast).